Reading from the N-terminus, the 76-residue chain is Liver-expressed antimicrobial peptide 2 (76 aa).

An N-terminal signal peptide occupies residues 1 to 22 (MLQLKLFAVLLTCLLLLGQVNS). A propeptide spanning residues 23–36 (SPVPEVSSAKRSRR) is cleaved from the precursor. 2 cysteine pairs are disulfide-bonded: Cys53/Cys64 and Cys59/Cys69.

This sequence belongs to the LEAP2 family.

Its subcellular location is the secreted. Has an antimicrobial activity. In Mus musculus (Mouse), this protein is Liver-expressed antimicrobial peptide 2 (Leap2).